We begin with the raw amino-acid sequence, 60 residues long: UPF0337 protein SAV1625 (60 aa).

The disordered stretch occupies residues 18-41; the sequence is VGNVTDNKELEKEGQQDKATGKAK. Over residues 23-41 the composition is skewed to basic and acidic residues; that stretch reads DNKELEKEGQQDKATGKAK.

This sequence belongs to the UPF0337 (CsbD) family.

The polypeptide is UPF0337 protein SAV1625 (Staphylococcus aureus (strain Mu50 / ATCC 700699)).